The chain runs to 318 residues: Protoheme IX farnesyltransferase (318 aa).

Transmembrane regions (helical) follow at residues 29–49, 51–71, 102–122, 123–143, 151–171, 179–199, 219–239, 241–261, and 280–300; these read IIPLLLITTAGSMWIAAQGQV, PVLLLVTMAGGTLAAASAQTI, LIFAIALAVLSFTLLTVFANL, LAASLALSGIIFYVLIYTHWL, IVIGGAAGAIPALVGWAAVTG, LIFAIVFLWTPPHFWALALMI, ATVKQIWYYTLITVVATLLLV, PLHSSGIVYAAIAISLGAVFI, and LFLYSISYMMLLCLGMVIDSL.

It belongs to the UbiA prenyltransferase family. Protoheme IX farnesyltransferase subfamily.

The protein resides in the cell inner membrane. It catalyses the reaction heme b + (2E,6E)-farnesyl diphosphate + H2O = Fe(II)-heme o + diphosphate. It functions in the pathway porphyrin-containing compound metabolism; heme O biosynthesis; heme O from protoheme: step 1/1. Its function is as follows. Converts heme B (protoheme IX) to heme O by substitution of the vinyl group on carbon 2 of heme B porphyrin ring with a hydroxyethyl farnesyl side group. In Trichormus variabilis (strain ATCC 29413 / PCC 7937) (Anabaena variabilis), this protein is Protoheme IX farnesyltransferase.